A 428-amino-acid polypeptide reads, in one-letter code: MLDIRLFRNEPVTVKSKIELRGDDSKVVDEILELDEQRRKLISATEEMKARRNKVSEEIALKKRNKENADDVIAEMRTLGDDIKEKDSQLNEIDNKMTGILCRIPNLISDDVPQGESDEDNVEVKKWGTPREFSFEPKAHWDIVEELKMADFDRAAKVSGARFVYLTNEGAQLERALMNYMITKHTTQHGYTEMMVPQLVNADTMYGTGQLPKFEEDLFKVEKEGLYTIPTAEVPLTNFYRNEIIQPGVLPEKFTGQSACFRSEAGSAGRDTRGLIRLHQFDKVEMVRFEQPEDSWNALEEMTTNAEAILEELGLPYRRVILCTGDIGFSASKTYDLEVWLPSYNDYKEISSCSNCTDFQARRANIRFKRDKAAKPELAHTLNGSGLAVGRTFAAIVENYQNEDGTVTIPEALVPFMGGKTQISKPVK.

231–233 (TAE) provides a ligand contact to L-serine. Residue 262 to 264 (RSE) participates in ATP binding. Position 285 (glutamate 285) interacts with L-serine. 349–352 (EISS) contributes to the ATP binding site. Serine 385 contacts L-serine.

This sequence belongs to the class-II aminoacyl-tRNA synthetase family. Type-1 seryl-tRNA synthetase subfamily. Homodimer. The tRNA molecule binds across the dimer.

Its subcellular location is the cytoplasm. It carries out the reaction tRNA(Ser) + L-serine + ATP = L-seryl-tRNA(Ser) + AMP + diphosphate + H(+). It catalyses the reaction tRNA(Sec) + L-serine + ATP = L-seryl-tRNA(Sec) + AMP + diphosphate + H(+). The protein operates within aminoacyl-tRNA biosynthesis; selenocysteinyl-tRNA(Sec) biosynthesis; L-seryl-tRNA(Sec) from L-serine and tRNA(Sec): step 1/1. Catalyzes the attachment of serine to tRNA(Ser). Is also able to aminoacylate tRNA(Sec) with serine, to form the misacylated tRNA L-seryl-tRNA(Sec), which will be further converted into selenocysteinyl-tRNA(Sec). The polypeptide is Serine--tRNA ligase (Staphylococcus aureus (strain MSSA476)).